The sequence spans 382 residues: Transforming growth factor beta-1 proprotein (382 aa).

The N-terminal stretch at 1 to 21 (MEVLWMLLVLLVLHLSSLAMS) is a signal peptide. The straightjacket domain stretch occupies residues 22–65 (LSTCKAVDMEEVRKRRIEAIRGQILSKLKLDKTPDVDSEKMTVP). The segment at 66-263 (SEAIFLYNST…SMPAERIDTV (198 aa)) is arm domain. N-linked (GlcNAc...) asparagine glycans are attached at residues Asn-73, Asn-123, and Asn-166. Positions 218–242 (PTPQAKDIDIEGFPALRGDLASLSS) are bowtie tail. Positions 234–236 (RGD) match the Cell attachment site motif. Cystine bridges form between Cys-277/Cys-286, Cys-285/Cys-348, Cys-314/Cys-379, and Cys-318/Cys-381.

Belongs to the TGF-beta family. As to quaternary structure, latency-associated peptide: Homodimer; disulfide-linked. Latency-associated peptide: Interacts with Transforming growth factor beta-1 (TGF-beta-1) chain; interaction is non-covalent and maintains (TGF-beta-1) in a latent state; each Latency-associated peptide (LAP) monomer interacts with TGF-beta-1 in the other monomer. Transforming growth factor beta-1: Homodimer; disulfide-linked. Transforming growth factor beta-1: Interacts with TGF-beta receptors (tgfbr1 and tgfbr2), leading to signal transduction. In terms of processing, transforming growth factor beta-1 proprotein: The precursor proprotein is cleaved in the Golgi apparatus to form Transforming growth factor beta-1 (TGF-beta-1) and Latency-associated peptide (LAP) chains, which remain non-covalently linked, rendering TGF-beta-1 inactive.

Its subcellular location is the secreted. It is found in the extracellular space. The protein resides in the extracellular matrix. In terms of biological role, transforming growth factor beta-1 proprotein: Precursor of the Latency-associated peptide (LAP) and Transforming growth factor beta-1 (TGF-beta-1) chains, which constitute the regulatory and active subunit of TGF-beta-1, respectively. Required to maintain the Transforming growth factor beta-1 (TGF-beta-1) chain in a latent state during storage in extracellular matrix. Associates non-covalently with TGF-beta-1 and regulates its activation via interaction with 'milieu molecules', such as LTBP1, LRRC32/GARP and LRRC33/NRROS, that control activation of TGF-beta-1. Interaction with integrins (ITGAV:ITGB6 or ITGAV:ITGB8) results in distortion of the Latency-associated peptide chain and subsequent release of the active TGF-beta-1. Functionally, transforming growth factor beta-1: Multifunctional protein that regulates the growth and differentiation of various cell types and is involved in various processes, such as normal development, immune function, microglia function and responses to neurodegeneration. Activation into mature form follows different steps: following cleavage of the proprotein in the Golgi apparatus, Latency-associated peptide (LAP) and Transforming growth factor beta-1 (TGF-beta-1) chains remain non-covalently linked rendering TGF-beta-1 inactive during storage in extracellular matrix. At the same time, LAP chain interacts with 'milieu molecules', such as ltbp1, lrrc32/garp and lrrc33/nrros that control activation of TGF-beta-1 and maintain it in a latent state during storage in extracellular milieus. TGF-beta-1 is released from LAP by integrins (ITGAV:ITGB6 or ITGAV:ITGB8): integrin-binding to LAP stabilizes an alternative conformation of the LAP bowtie tail and results in distortion of the LAP chain and subsequent release of the active TGF-beta-1. Once activated following release of LAP, TGF-beta-1 acts by binding to TGF-beta receptors (tgfbr1 and tgfbr2), which transduce signal. While expressed by many cells types, TGF-beta-1 only has a very localized range of action within cell environment thanks to fine regulation of its activation by Latency-associated peptide chain (LAP) and 'milieu molecules'. Plays an important role in bone remodeling: acts as a potent stimulator of osteoblastic bone formation. Can promote either T-helper 17 cells (Th17) or regulatory T-cells (Treg) lineage differentiation in a concentration-dependent manner. Can induce epithelial-to-mesenchymal transition (EMT) and cell migration in various cell types. The sequence is that of Transforming growth factor beta-1 proprotein (tgfb1) from Xenopus laevis (African clawed frog).